Consider the following 151-residue polypeptide: D-aminoacyl-tRNA deacylase (151 aa).

Positions 138–139 (GP) match the Gly-cisPro motif, important for rejection of L-amino acids motif.

This sequence belongs to the DTD family. As to quaternary structure, homodimer.

It localises to the cytoplasm. It catalyses the reaction glycyl-tRNA(Ala) + H2O = tRNA(Ala) + glycine + H(+). The enzyme catalyses a D-aminoacyl-tRNA + H2O = a tRNA + a D-alpha-amino acid + H(+). Its function is as follows. An aminoacyl-tRNA editing enzyme that deacylates mischarged D-aminoacyl-tRNAs. Also deacylates mischarged glycyl-tRNA(Ala), protecting cells against glycine mischarging by AlaRS. Acts via tRNA-based rather than protein-based catalysis; rejects L-amino acids rather than detecting D-amino acids in the active site. By recycling D-aminoacyl-tRNA to D-amino acids and free tRNA molecules, this enzyme counteracts the toxicity associated with the formation of D-aminoacyl-tRNA entities in vivo and helps enforce protein L-homochirality. This Picosynechococcus sp. (strain ATCC 27264 / PCC 7002 / PR-6) (Agmenellum quadruplicatum) protein is D-aminoacyl-tRNA deacylase.